Reading from the N-terminus, the 155-residue chain is Fibroblast growth factor 2 (155 aa).

Positions 1-9 (MAAGSITTL) are excised as a propeptide. A disordered region spans residues 1-20 (MAAGSITTLPALPEDGGSSA). A heparin-binding site is contributed by Asn-36. The Cell attachment site; atypical motif lies at 46-48 (DGR). Tyr-82 carries the post-translational modification Phosphotyrosine; by TEC. The Cell attachment site; atypical motif lies at 88-90 (DGR). Residue Lys-95 forms a Glycyl lysine isopeptide (Lys-Gly) (interchain with G-Cter in SUMO1) linkage. The interval 128 to 144 (KRTGQYKLGPKTGPGQK) is heparin-binding.

This sequence belongs to the heparin-binding growth factors family. Monomer. Homodimer. Interacts with FGFR1, FGFR2, FGFR3 and FGFR4. Affinity between fibroblast growth factors (FGFs) and their receptors is increased by heparan sulfate glycosaminoglycans that function as coreceptors. Interacts with CSPG4, FGFBP1 and TEC. Found in a complex with FGFBP1, FGF1 and FGF2. Interacts with FGFBP3. Interacts with integrin ITGAV:ITGB3; the interaction is required for FGF2 signaling. Interacts with SNORC (via the extracellular domain). Interacts with glypican GPC3. Post-translationally, phosphorylation at Tyr-82 regulates FGF2 unconventional secretion.

It localises to the secreted. Its subcellular location is the nucleus. Its function is as follows. Acts as a ligand for FGFR1, FGFR2, FGFR3 and FGFR4. Also acts as an integrin ligand which is required for FGF2 signaling. Binds to integrin ITGAV:ITGB3. Plays an important role in the regulation of cell survival, cell division, cell differentiation and cell migration. Functions as a potent mitogen in vitro. Can induce angiogenesis. Mediates phosphorylation of ERK1/2 and thereby promotes retinal lens fiber differentiation. This is Fibroblast growth factor 2 (FGF2) from Ovis aries (Sheep).